Consider the following 324-residue polypeptide: Concanavalin B (324 aa).

Residues 1 to 25 (MGCERKALILMVVIWIMSFWTLSLA) form the signal peptide. The GH18 domain maps to 30-311 (TEIAVYWGQR…TNIIRYLNAT (282 aa)). Residue asparagine 309 is glycosylated (N-linked (GlcNAc...) asparagine).

Belongs to the glycosyl hydrolase 18 family.

In terms of biological role, may act as a carbohydrate-binding protein. In Canavalia ensiformis (Jack bean), this protein is Concanavalin B.